A 134-amino-acid polypeptide reads, in one-letter code: MDHTSSVGLRKTGRRKCAVAQVRIIEGTGQLTINQRPGVPYLQYNPAYLLAAQGALDVTELTNRYDTIVKTKGGGLTGQAEAIKLGLARALCSLHIKHRKALKPQGYLTRNPLRKERKKYGLKKARKAPQFSKR.

The disordered stretch occupies residues 105 to 134; that stretch reads QGYLTRNPLRKERKKYGLKKARKAPQFSKR. Residues 115–134 show a composition bias toward basic residues; that stretch reads KERKKYGLKKARKAPQFSKR.

It belongs to the universal ribosomal protein uS9 family.

It is found in the plastid. The protein localises to the chloroplast. This chain is Small ribosomal subunit protein uS9c (rps9), found in Nephroselmis olivacea (Green alga).